The following is a 403-amino-acid chain: MLSPTNSTSKTAPVPPRDSSKPVLISEEPRNQLLQKVARTALAVLLVVVTLGLILLFYSFSDLQSFPWCCQTHPSTKEQPTISIPVPLPSPPLAVPRPSTPPAPTPAISRPSTPSAPKPSTPPPLLPKAPKPVKTQENLFPLVPEQVFVEMYEDMARRRIIEALVPAWDSDIIFKCLCYFHTLYPGLIPLETFPPATIFNFKQKIISILEDKKAVLRGEPIKGSLPICCSKENYRRHLQGTTLLPMFMWYHPTPKTLADTMQTMKQLAIKGSVGASHWLLVIVDIQARRLVYFDSLYNYVMPPEDMKKDLQSLAQQLDQVYPARNGQKFSVKIAAKEVIQKDSGFSCGAWCCQFLYWYLRDPFTDALNDLPVDSVERHENLASFVQACEAAVQDLPELSWPEA.

Positions Met-1–Thr-11 are enriched in polar residues. Residues Met-1–Leu-24 are disordered. The helical transmembrane segment at Thr-40–Phe-60 threads the bilayer. Positions Lys-77 to Pro-132 are disordered. Pro residues-rich tracts occupy residues Val-86–Thr-105 and Pro-114–Pro-130. Residues His-277, Asp-294, and Cys-347 contribute to the active site.

This sequence belongs to the peptidase C48 family.

The protein resides in the secreted. It localises to the host cell. The protein localises to the membrane. Effector proteins function to alter host cell physiology and promote bacterial survival in host tissues. This protease possesses deubiquitinating and deneddylating activities. The chain is Deubiquitinase and deneddylase Dub1 (cdu1) from Chlamydia trachomatis serovar L2b (strain UCH-1/proctitis).